Here is a 313-residue protein sequence, read N- to C-terminus: Aspartate carbamoyltransferase catalytic subunit (313 aa).

Carbamoyl phosphate is bound by residues R51 and T52. Residue K80 coordinates L-aspartate. The carbamoyl phosphate site is built by R101, H129, and Q132. L-aspartate-binding residues include R162 and R224. 2 residues coordinate carbamoyl phosphate: L263 and P264.

It belongs to the aspartate/ornithine carbamoyltransferase superfamily. ATCase family. Heterododecamer (2C3:3R2) of six catalytic PyrB chains organized as two trimers (C3), and six regulatory PyrI chains organized as three dimers (R2).

It carries out the reaction carbamoyl phosphate + L-aspartate = N-carbamoyl-L-aspartate + phosphate + H(+). It participates in pyrimidine metabolism; UMP biosynthesis via de novo pathway; (S)-dihydroorotate from bicarbonate: step 2/3. Functionally, catalyzes the condensation of carbamoyl phosphate and aspartate to form carbamoyl aspartate and inorganic phosphate, the committed step in the de novo pyrimidine nucleotide biosynthesis pathway. The protein is Aspartate carbamoyltransferase catalytic subunit of Bacteroides thetaiotaomicron (strain ATCC 29148 / DSM 2079 / JCM 5827 / CCUG 10774 / NCTC 10582 / VPI-5482 / E50).